The primary structure comprises 136 residues: MLQPKRTKFRKVMTGRNRGLAKGTEVSFGDFGLKAVGRGRLTARQIEAARRAMTRHIKRQGQIWIRVFPDKPITEKPLEVRQGKGKGNVEYWVAQIQPGKVMYEMNGVPEELAREAFRLAARKLPIKTTFVTKQVM.

This sequence belongs to the universal ribosomal protein uL16 family. In terms of assembly, part of the 50S ribosomal subunit.

Functionally, binds 23S rRNA and is also seen to make contacts with the A and possibly P site tRNAs. The chain is Large ribosomal subunit protein uL16 from Aliivibrio fischeri (strain ATCC 700601 / ES114) (Vibrio fischeri).